Reading from the N-terminus, the 1332-residue chain is Misshapen-like kinase 1 (1332 aa).

Residues 25-289 (FELVEVVGNG…TEQLLKFPFI (265 aa)) enclose the Protein kinase domain. Residues 31-39 (VGNGTYGQV) and Lys-54 each bind ATP. The active-site Proton acceptor is Asp-153. Disordered regions lie at residues 300 to 347 (IQLK…NVPG), 363 to 383 (KSNS…QRDP), and 395 to 887 (QRRI…GTMV). Residues 317 to 333 (EETEYEYSGSEEEDDSH) are compositionally biased toward acidic residues. Residues Ser-324 and Ser-326 each carry the phosphoserine modification. Over residues 371 to 380 (QQQQLQQQQQ) the composition is skewed to low complexity. The span at 396-466 (RRIEEQKEER…EEQRQSERLQ (71 aa)) shows a compositional bias: basic and acidic residues. The segment covering 479–497 (LQQQQQQQQLQKQQQQQLL) has biased composition (low complexity). 2 positions are modified to omega-N-methylarginine: Arg-501 and Arg-509. Residues 518–528 (AWAREVEERTR) show a composition bias toward basic and acidic residues. Positions 547 to 561 (PEPPIPQASPGPPGP) are enriched in pro residues. The span at 598–608 (RSQSLQDQPTR) shows a compositional bias: polar residues. At Ser-641 the chain carries Phosphoserine. Residues 670-682 (QRTSSIATALNTS) are compositionally biased toward polar residues. Ser-701 bears the Phosphoserine mark. Over residues 716 to 729 (PKPPGPPAQPPGPP) the composition is skewed to pro residues. Positions 736-748 (DLRRSDPGWERSD) are enriched in basic and acidic residues. Ser-754, Ser-763, Ser-777, Ser-778, and Ser-782 each carry phosphoserine. The span at 804 to 821 (LLKERTLDEAPRPPKKAM) shows a compositional bias: basic and acidic residues. The span at 828–841 (EEVESSEDDEEEGE) shows a compositional bias: acidic residues. The interval 866 to 1332 (MVVHDVEEIT…TLNRNCIMNW (467 aa)) is mediates interaction with RAP2A. Phosphothreonine is present on Thr-891. The tract at residues 902–943 (DSNGYTNLPDVVQPSHSPTENSKGQSPPSKDGSGDYQSRGLV) is disordered. Positions 915–929 (PSHSPTENSKGQSPP) are enriched in polar residues. One can recognise a CNH domain in the interval 1019 to 1306 (NSEILCAALW…KFLCERNDKV (288 aa)).

It belongs to the protein kinase superfamily. STE Ser/Thr protein kinase family. STE20 subfamily. As to quaternary structure, interacts with TANC1. Interacts with RAP2A. Isoform 4 interacts with NCK1. It depends on Mg(2+) as a cofactor. Autophosphorylated. Expressed in the brain, isoform 2 is more abundant than isoform 1. Isoform 3 is ubiquitously expressed. Isoform 1 is most abundant in the skeletal muscle. Isoform 4 is ubiquitously expressed with relative high levels in brain, skeletal muscle, pancreas and testis.

The protein localises to the cytoplasm. It is found in the postsynaptic density. Its subcellular location is the cell projection. The protein resides in the axon. It localises to the dendrite. The protein localises to the golgi apparatus. It catalyses the reaction L-seryl-[protein] + ATP = O-phospho-L-seryl-[protein] + ADP + H(+). The enzyme catalyses L-threonyl-[protein] + ATP = O-phospho-L-threonyl-[protein] + ADP + H(+). Functionally, serine/threonine kinase which acts as a negative regulator of Ras-related Rap2-mediated signal transduction to control neuronal structure and AMPA receptor trafficking. Required for normal synaptic density, dendrite complexity, as well as surface AMPA receptor expression in hippocampal neurons. Can activate the JNK and MAPK14/p38 pathways and mediates stimulation of the stress-activated protein kinase MAPK14/p38 MAPK downstream of the Raf/ERK pathway. Phosphorylates TANC1 upon stimulation by RAP2A, MBP and SMAD1. Has an essential function in negative selection of thymocytes, perhaps by coupling NCK1 to activation of JNK1. Activator of the Hippo signaling pathway which plays a pivotal role in organ size control and tumor suppression by restricting proliferation and promoting apoptosis. MAP4Ks act in parallel to and are partially redundant with STK3/MST2 and STK4/MST2 in the phosphorylation and activation of LATS1/2, and establish MAP4Ks as components of the expanded Hippo pathway. In terms of biological role, isoform 4 can activate the JNK pathway. Involved in the regulation of actin cytoskeleton reorganization, cell-matrix adhesion, cell-cell adhesion and cell migration. The sequence is that of Misshapen-like kinase 1 from Homo sapiens (Human).